The sequence spans 272 residues: MTLQEQIMKALHVQPVIDLKAEIRKRVDFLKDYVKKTGAKGFVLGISGGQDSTLAGRLAQLAVEEIRNEGGNATFIAVRLPYKVQKDEDDAQLALQFIQADQSVAFDIASTVDAFSNQYENLLDESLTDFNKGNVKARIRMVTQYAIGGQKGLLVIGTDHAAEAVTGFFTKFGDGGADLLPLTGLTKRQGRALLQELGADERLYLKMPTADLLDEKPGQADETELGITYDQLDDYLEGKTVPADVAEKIEKRYTVSEHKRQVPASMFDDWWK.

45-52 is an ATP binding site; the sequence is GISGGQDS. Position 51 (Asp-51) interacts with Mg(2+). Position 138 (Arg-138) interacts with deamido-NAD(+). ATP is bound at residue Thr-158. Glu-163 lines the Mg(2+) pocket. Positions 171 and 178 each coordinate deamido-NAD(+). ATP-binding residues include Lys-187 and Thr-209. A deamido-NAD(+)-binding site is contributed by 258 to 259; that stretch reads HK.

It belongs to the NAD synthetase family. As to quaternary structure, homodimer.

It catalyses the reaction deamido-NAD(+) + NH4(+) + ATP = AMP + diphosphate + NAD(+) + H(+). The protein operates within cofactor biosynthesis; NAD(+) biosynthesis; NAD(+) from deamido-NAD(+) (ammonia route): step 1/1. In terms of biological role, catalyzes the ATP-dependent amidation of deamido-NAD to form NAD. Uses ammonia as a nitrogen source. The polypeptide is NH(3)-dependent NAD(+) synthetase (Bacillus thuringiensis subsp. konkukian (strain 97-27)).